The following is a 240-amino-acid chain: MSWFLVLKCLLTVCIISHLSVSSTESYGCIRKTCFGGRCLHNTTRSCEFSKGCFSQLQEFAVPLLLLNRRVEQRGCSEDNCTELAFSATLGIDWMFSYNHQCCYSEQCNNKPINVSPLSLQPNGVECPTCYSELGTCRPVSLKCTGAQTTCVNVTGQGIREDFIKIHAMGCATQTACNLKNVIILNNIKIDTSCVSGSPPLRYSPSLSTDQKTSSATAPTLCLLAAVLPAIMVMESFSEL.

The signal sequence occupies residues 1 to 26 (MSWFLVLKCLLTVCIISHLSVSSTES). Asparagine 42 carries an N-linked (GlcNAc...) asparagine glycan. Disulfide bonds link cysteine 47-cysteine 76, cysteine 81-cysteine 102, cysteine 103-cysteine 108, cysteine 127-cysteine 151, and cysteine 144-cysteine 171. The N-linked (GlcNAc...) asparagine glycan is linked to asparagine 153.

This sequence belongs to the CNF-like-inhibitor family. Post-translationally, N-glycosylated. Expressed abundantly in bone, including the lengthening growth plate where cartilage is remodeled into bone.

Its subcellular location is the secreted. Its function is as follows. May play a novel role in the growth or remodeling of bone. The sequence is that of Protein RoBo-1 from Rattus norvegicus (Rat).